Consider the following 422-residue polypeptide: GTPase Obg (422 aa).

The 156-residue stretch at Met-1–Leu-156 folds into the Obg domain. Residues Ala-157 to Glu-324 enclose the OBG-type G domain. GTP is bound by residues Gly-163–Ser-170, Phe-188–Val-192, Asp-209–Gly-212, Asn-278–Asp-281, and Ser-305–Leu-307. Mg(2+) is bound by residues Ser-170 and Thr-190. One can recognise an OCT domain in the interval Asn-342 to Asp-420.

This sequence belongs to the TRAFAC class OBG-HflX-like GTPase superfamily. OBG GTPase family. As to quaternary structure, monomer. It depends on Mg(2+) as a cofactor.

The protein localises to the cytoplasm. Functionally, an essential GTPase which binds GTP, GDP and possibly (p)ppGpp with moderate affinity, with high nucleotide exchange rates and a fairly low GTP hydrolysis rate. Plays a role in control of the cell cycle, stress response, ribosome biogenesis and in those bacteria that undergo differentiation, in morphogenesis control. In Metamycoplasma arthritidis (strain 158L3-1) (Mycoplasma arthritidis), this protein is GTPase Obg.